A 516-amino-acid chain; its full sequence is Protein indeterminate-domain 4, chloroplastic (516 aa).

Positions 1–26 are enriched in low complexity; it reads MSSSSYNTSVIPSSSSSAQPFFITSS. The interval 1–68 is disordered; sequence MSSSSYNTSV…QPGNPNPDAE (68 aa). A chloroplast-targeting transit peptide spans 1 to 70; it reads MSSSSYNTSV…GNPNPDAEVV (70 aa). Serine 73 carries the post-translational modification Phosphoserine. C2H2-type zinc fingers lie at residues 83-105 and 124-154; these read FICDVCNKGFQREQNLQLHRRGH and YLCPEPTCVHHDPSRALGDLTGIKKHYYRKH. The short motif at 146 to 153 is the Nuclear localization signal element; it reads IKKHYYRK. The C2H2-type 2; degenerate zinc finger occupies 159 to 182; sequence WKCEKCSKRYAVQSDWKAHSKTCG. The Zn(2+) site is built by cysteine 161, cysteine 164, histidine 177, cysteine 181, cysteine 188, cysteine 190, histidine 203, and cysteine 207. The CCHC-type 2; atypical zinc-finger motif lies at 186-209; sequence YRCDCGTIFSRRDSYITHRAFCDA. The segment at 196–208 is SHR-binding; that stretch reads RRDSYITHRAFCD. The disordered stretch occupies residues 483-516; it reads NRGGGGGGRGSARGGVSLDGEAKFPEQNYPFGRG. The segment covering 484–495 has biased composition (gly residues); the sequence is RGGGGGGRGSAR.

Binds to RGA and SCL3 competitively in the nucleus.

Its subcellular location is the plastid. The protein localises to the chloroplast. The protein resides in the nucleus. Transcription factor that may act a transcriptional activator of nuclear-encoded photosynthetic gene expression. Binds DNA via its zinc fingers. Recognizes and binds to SCL3 promoter sequence 5'-AGACAA-3' to promote its expression when in complex with RGA. The sequence is that of Protein indeterminate-domain 4, chloroplastic from Arabidopsis thaliana (Mouse-ear cress).